Here is a 226-residue protein sequence, read N- to C-terminus: Probable transaldolase (226 aa).

The Schiff-base intermediate with substrate role is filled by lysine 91.

Belongs to the transaldolase family. Type 3B subfamily.

The protein localises to the cytoplasm. It catalyses the reaction D-sedoheptulose 7-phosphate + D-glyceraldehyde 3-phosphate = D-erythrose 4-phosphate + beta-D-fructose 6-phosphate. It functions in the pathway carbohydrate degradation; pentose phosphate pathway; D-glyceraldehyde 3-phosphate and beta-D-fructose 6-phosphate from D-ribose 5-phosphate and D-xylulose 5-phosphate (non-oxidative stage): step 2/3. In terms of biological role, transaldolase is important for the balance of metabolites in the pentose-phosphate pathway. This chain is Probable transaldolase, found in Chlorobium phaeobacteroides (strain DSM 266 / SMG 266 / 2430).